Reading from the N-terminus, the 1024-residue chain is Multidrug resistance protein MdtC (1024 aa).

A run of 12 helical transmembrane segments spans residues 12–32 (VATT…FSLL), 333–353 (EVER…FIFL), 360–380 (LIPA…MYLC), 387–407 (LSLM…IVVL), 435–455 (VLSM…MAGL), 469–489 (VAIG…CAWL), 528–548 (WVMV…ISIP), 853–873 (LWLI…LYES), 875–895 (VHPL…LLAL), 897–917 (LFDA…IGIV), 953–973 (PIIM…LSSG), and 984–1004 (ITIV…TPVI).

The protein belongs to the resistance-nodulation-cell division (RND) (TC 2.A.6) family. MdtC subfamily. Part of a tripartite efflux system composed of MdtA, MdtB and MdtC. MdtC forms a heteromultimer with MdtB.

The protein resides in the cell inner membrane. The sequence is that of Multidrug resistance protein MdtC from Yersinia pseudotuberculosis serotype IB (strain PB1/+).